The primary structure comprises 254 residues: Small ribosomal subunit protein uS2 (254 aa).

This sequence belongs to the universal ribosomal protein uS2 family.

The chain is Small ribosomal subunit protein uS2 from Legionella pneumophila subsp. pneumophila (strain Philadelphia 1 / ATCC 33152 / DSM 7513).